Consider the following 312-residue polypeptide: Pre-mRNA-splicing factor 38A (312 aa).

An N-terminal protein interaction domain region spans residues 1–179 (MANRTVKDAH…VLEEAEQLEP (179 aa)). A phosphoserine mark is found at S11, S193, S194, S209, and S226. A coiled-coil region spans residues 170 to 204 (VLEEAEQLEPRVSALEEDMDDVESSEEEEEEDEKL). A disordered region spans residues 181-312 (VSALEEDMDD…SHKKSRRGNE (132 aa)). Residues 184–202 (LEEDMDDVESSEEEEEEDE) show a composition bias toward acidic residues. A compositionally biased stretch (basic and acidic residues) spans 203-224 (KLERVPSPDHRRRSYRDLDKPR). Basic residues-rich tracts occupy residues 225–294 (RSPT…RSHS) and 301–312 (KKSHKKSRRGNE).

Belongs to the PRP38 family. As to quaternary structure, component of the spliceosome B complex. Interacts (via N-terminal interaction domain) with ZMAT2 and MFAP1.

It is found in the nucleus. Involved in pre-mRNA splicing as a component of the spliceosome. This is Pre-mRNA-splicing factor 38A (PRPF38A) from Bos taurus (Bovine).